A 263-amino-acid polypeptide reads, in one-letter code: Glutathione S-transferase F8, chloroplastic (263 aa).

Residues 1 to 49 (MGAIQARLPLFLSPPSIKHHTFLHSSSSNSNFKIRSNKSSSSSSSSIIM) constitute a chloroplast transit peptide. The 82-residue stretch at 50–131 (ASIKVHGVPM…YLAEEYSEKG (82 aa)) folds into the GST N-terminal domain. Glutathione is bound by residues 60–61 (ST), 89–90 (HK), 102–103 (QI), and 115–116 (ES). The 125-residue stretch at 139-263 (CKKVKATTNV…WAKVIDLQKQ (125 aa)) folds into the GST C-terminal domain. The residue at position 177 (threonine 177) is a Phosphothreonine.

It belongs to the GST superfamily. Phi family. As to expression, isoform 1 is predominantly expressed in leaves and isoform 2 in roots.

The protein resides in the plastid. It localises to the chloroplast. Its subcellular location is the cytoplasm. It is found in the cytosol. It carries out the reaction RX + glutathione = an S-substituted glutathione + a halide anion + H(+). Its function is as follows. In vitro, possesses glutathione S-transferase activity toward 1-chloro-2,4-dinitrobenzene (CDNB) and glutathione peroxidase activity toward cumene hydroperoxide and linoleic acid-13-hydroperoxide. May be involved in the conjugation of reduced glutathione to a wide number of exogenous and endogenous hydrophobic electrophiles and have a detoxification role against certain herbicides. This Arabidopsis thaliana (Mouse-ear cress) protein is Glutathione S-transferase F8, chloroplastic (GSTF8).